The following is a 435-amino-acid chain: Elongation factor 1-alpha (435 aa).

Residues 4–229 (KPHLNLIVIG…DMLEIPPKPV (226 aa)) enclose the tr-type G domain. Positions 13–20 (GHVDHGKS) are G1. 13 to 20 (GHVDHGKS) provides a ligand contact to GTP. S20 provides a ligand contact to Mg(2+). The tract at residues 69 to 73 (GVTIN) is G2. The interval 90–93 (DAPG) is G3. GTP contacts are provided by residues 90–94 (DAPGH) and 152–155 (TKMD). The interval 152–155 (TKMD) is G4. Residues 193 to 195 (VSI) are G5.

This sequence belongs to the TRAFAC class translation factor GTPase superfamily. Classic translation factor GTPase family. EF-Tu/EF-1A subfamily.

Its subcellular location is the cytoplasm. It catalyses the reaction GTP + H2O = GDP + phosphate + H(+). GTP hydrolase that promotes the GTP-dependent binding of aminoacyl-tRNA to the A-site of ribosomes during protein biosynthesis. In Metallosphaera sedula (strain ATCC 51363 / DSM 5348 / JCM 9185 / NBRC 15509 / TH2), this protein is Elongation factor 1-alpha.